The chain runs to 589 residues: Aspartate--tRNA ligase (589 aa).

L-aspartate is bound at residue Glu174. The segment at Gln198–Lys201 is aspartate. L-aspartate is bound at residue Arg220. ATP is bound by residues Arg220–Glu222 and Gln229. Residue His448 participates in L-aspartate binding. Position 484 (Glu484) interacts with ATP. Arg491 serves as a coordination point for L-aspartate. Gly536–Arg539 contacts ATP.

It belongs to the class-II aminoacyl-tRNA synthetase family. Type 1 subfamily. Homodimer.

It localises to the cytoplasm. It carries out the reaction tRNA(Asp) + L-aspartate + ATP = L-aspartyl-tRNA(Asp) + AMP + diphosphate. Its function is as follows. Catalyzes the attachment of L-aspartate to tRNA(Asp) in a two-step reaction: L-aspartate is first activated by ATP to form Asp-AMP and then transferred to the acceptor end of tRNA(Asp). The chain is Aspartate--tRNA ligase from Leuconostoc citreum (strain KM20).